Consider the following 469-residue polypeptide: ATP synthase subunit beta (469 aa).

156 to 163 (GGAGVGKT) lines the ATP pocket.

Belongs to the ATPase alpha/beta chains family. In terms of assembly, F-type ATPases have 2 components, CF(1) - the catalytic core - and CF(0) - the membrane proton channel. CF(1) has five subunits: alpha(3), beta(3), gamma(1), delta(1), epsilon(1). CF(0) has three main subunits: a(1), b(2) and c(9-12). The alpha and beta chains form an alternating ring which encloses part of the gamma chain. CF(1) is attached to CF(0) by a central stalk formed by the gamma and epsilon chains, while a peripheral stalk is formed by the delta and b chains.

The protein localises to the cell membrane. It catalyses the reaction ATP + H2O + 4 H(+)(in) = ADP + phosphate + 5 H(+)(out). Functionally, produces ATP from ADP in the presence of a proton gradient across the membrane. The catalytic sites are hosted primarily by the beta subunits. This chain is ATP synthase subunit beta, found in Bacillus mycoides (strain KBAB4) (Bacillus weihenstephanensis).